Consider the following 96-residue polypeptide: Small ribosomal subunit protein bS6 (96 aa).

The protein belongs to the bacterial ribosomal protein bS6 family.

Functionally, binds together with bS18 to 16S ribosomal RNA. The polypeptide is Small ribosomal subunit protein bS6 (Bacillus thuringiensis subsp. konkukian (strain 97-27)).